A 243-amino-acid polypeptide reads, in one-letter code: Pyridoxine 5'-phosphate synthase (243 aa).

3-amino-2-oxopropyl phosphate is bound at residue asparagine 9. Residue 11–12 participates in 1-deoxy-D-xylulose 5-phosphate binding; sequence DH. Arginine 20 lines the 3-amino-2-oxopropyl phosphate pocket. Histidine 45 acts as the Proton acceptor in catalysis. 1-deoxy-D-xylulose 5-phosphate-binding residues include arginine 47 and histidine 52. Residue glutamate 72 is the Proton acceptor of the active site. Threonine 102 lines the 1-deoxy-D-xylulose 5-phosphate pocket. The active-site Proton donor is the histidine 193. Residues glycine 194 and 215 to 216 contribute to the 3-amino-2-oxopropyl phosphate site; that span reads GH.

Belongs to the PNP synthase family. As to quaternary structure, homooctamer; tetramer of dimers.

It localises to the cytoplasm. The enzyme catalyses 3-amino-2-oxopropyl phosphate + 1-deoxy-D-xylulose 5-phosphate = pyridoxine 5'-phosphate + phosphate + 2 H2O + H(+). The protein operates within cofactor biosynthesis; pyridoxine 5'-phosphate biosynthesis; pyridoxine 5'-phosphate from D-erythrose 4-phosphate: step 5/5. Catalyzes the complicated ring closure reaction between the two acyclic compounds 1-deoxy-D-xylulose-5-phosphate (DXP) and 3-amino-2-oxopropyl phosphate (1-amino-acetone-3-phosphate or AAP) to form pyridoxine 5'-phosphate (PNP) and inorganic phosphate. The chain is Pyridoxine 5'-phosphate synthase from Escherichia coli O6:H1 (strain CFT073 / ATCC 700928 / UPEC).